A 495-amino-acid chain; its full sequence is Trimethylamine methyltransferase MttB1 (495 aa).

Pyl-334 is a non-standard amino acid (pyrrolysine).

It belongs to the trimethylamine methyltransferase family. In terms of assembly, can form a complex with MttC.

It catalyses the reaction Co(I)-[trimethylamine-specific corrinoid protein] + trimethylamine + H(+) = methyl-Co(III)-[trimethylamine-specific corrinoid protein] + dimethylamine. It functions in the pathway one-carbon metabolism; methanogenesis from trimethylamine. Its function is as follows. Catalyzes the transfer of a methyl group from trimethylamine to the corrinoid cofactor of MttC. This Methanosarcina acetivorans (strain ATCC 35395 / DSM 2834 / JCM 12185 / C2A) protein is Trimethylamine methyltransferase MttB1 (mttB1).